Consider the following 198-residue polypeptide: Protein GrpE (198 aa).

Positions 1–27 are enriched in basic and acidic residues; the sequence is MEERNEQVVEETKEAQTEEATIEKNSE. The segment at 1-39 is disordered; it reads MEERNEQVVEETKEAQTEEATIEKNSEESVTEEATEETV. Residues 29-39 are compositionally biased toward acidic residues; the sequence is SVTEEATEETV.

This sequence belongs to the GrpE family. In terms of assembly, homodimer.

The protein localises to the cytoplasm. Functionally, participates actively in the response to hyperosmotic and heat shock by preventing the aggregation of stress-denatured proteins, in association with DnaK and GrpE. It is the nucleotide exchange factor for DnaK and may function as a thermosensor. Unfolded proteins bind initially to DnaJ; upon interaction with the DnaJ-bound protein, DnaK hydrolyzes its bound ATP, resulting in the formation of a stable complex. GrpE releases ADP from DnaK; ATP binding to DnaK triggers the release of the substrate protein, thus completing the reaction cycle. Several rounds of ATP-dependent interactions between DnaJ, DnaK and GrpE are required for fully efficient folding. This is Protein GrpE from Bacillus cytotoxicus (strain DSM 22905 / CIP 110041 / 391-98 / NVH 391-98).